Here is a 205-residue protein sequence, read N- to C-terminus: Urease accessory protein UreE (205 aa).

Positions 170 to 192 (EHHGHSHSHSHDHDHDHDHDHQH) are enriched in basic and acidic residues. Residues 170 to 205 (EHHGHSHSHSHDHDHDHDHDHQHGPCCSHGHHHGHR) form a disordered region.

This sequence belongs to the UreE family.

The protein localises to the cytoplasm. Its function is as follows. Involved in urease metallocenter assembly. Binds nickel. Probably functions as a nickel donor during metallocenter assembly. The chain is Urease accessory protein UreE from Burkholderia pseudomallei (strain 668).